Here is a 179-residue protein sequence, read N- to C-terminus: Transcription factor NF-E4 (179 aa).

An N6-acetyllysine modification is found at Lys43. A disordered region spans residues 100–179 (AMKATGPHNA…QLPSLHLSQG (80 aa)). 2 stretches are compositionally biased toward polar residues: residues 143 to 153 (LSQSNPPTRIS) and 163 to 179 (ALEQ…LSQG).

Component of the SSP (stage selector protein) complex, which appears to be a heteromer of TFCP2 and 2 copies of NFE4. Interacts with HDAC1 and PCAF. Isoform 2 interacts with TFCP2. Post-translationally, acetylation at Lys-43 prolongs the protein half-life by preventing ubiquitin-mediated degradation and reduces the interaction between NF-E4 and HDAC1, potentially maximizing the activating ability of the factor at the gamma-promoter. Ubiquitinated; leading to its degradation by the proteasome. Acetylation at Lys-43 prevents ubiquitination. As to expression, specifically expressed in fetal liver, cord blood and bone marrow. Also expressed in the K562 and HEL cell lines, which constitutively express the fetal globin genes.

The protein resides in the nucleus. Functionally, functions as part of the SSP (stage selector protein) complex, a complex that contributes to the preferential expression of the gamma-gene in fetal erythroid cells by facilitating the interaction of the gamma-globin genes with enhancer elements contained in the locus control region (LCR). The complex binds to the stage selector element (SSE) in the proximal gamma-globin promoter. In contrast, isoform 2 acts as a repressor of gamma-globin gene expression by preventing NFE2 and RNA polymerase II recruitment to the promoter. The protein is Transcription factor NF-E4 (NFE4) of Homo sapiens (Human).